Here is an 86-residue protein sequence, read N- to C-terminus: Large ribosomal subunit protein bL27 (86 aa).

This sequence belongs to the bacterial ribosomal protein bL27 family.

The chain is Large ribosomal subunit protein bL27 from Xanthomonas axonopodis pv. citri (strain 306).